Reading from the N-terminus, the 309-residue chain is Methionyl-tRNA formyltransferase (309 aa).

109 to 112 (SLLP) contributes to the (6S)-5,6,7,8-tetrahydrofolate binding site.

Belongs to the Fmt family.

It carries out the reaction L-methionyl-tRNA(fMet) + (6R)-10-formyltetrahydrofolate = N-formyl-L-methionyl-tRNA(fMet) + (6S)-5,6,7,8-tetrahydrofolate + H(+). In terms of biological role, attaches a formyl group to the free amino group of methionyl-tRNA(fMet). The formyl group appears to play a dual role in the initiator identity of N-formylmethionyl-tRNA by promoting its recognition by IF2 and preventing the misappropriation of this tRNA by the elongation apparatus. The polypeptide is Methionyl-tRNA formyltransferase (Clostridium perfringens (strain SM101 / Type A)).